We begin with the raw amino-acid sequence, 413 residues long: MADWQVIEGNITAPKGFKAAGITAGLKPSGSPDLSLIYSETEAIAAGVFTTSQVRAACVDYCRQRLQAKASARAILVNSGQANAGTGKQGWDDAVESAQLLAQGLNISPESILLASTGVIGQRIKMEQLRQGITPLIQSLAPNGGDKAARAIMTTDLVPKTIALETEIDGRPVRMGGIAKGSGMIHPNMATMLAFVTCDAAVSTALWQQMLSRATQKTFNQVTVDGDTSTNDSLFALANGESRTAAITEMGPNAEKLEAMLTAVCQHLAKAIARDGEGATCLMEIQVTGAPDDQSARAVARTIAGSSLVKSAVFGRDPNWGRIAGAAGRAGVKFDQNNLLIKLGNYVLMDQGQPLEFDRPGASNYLKQAASGAYLEQDTVLIQVDLGTGSGQGTAWGCDLSYDYVRINADYTT.

Residues T154, K180, T191, E277, N408, and T413 each contribute to the substrate site. The active-site Nucleophile is the T191.

It belongs to the ArgJ family. Heterotetramer of two alpha and two beta chains.

It is found in the cytoplasm. The catalysed reaction is N(2)-acetyl-L-ornithine + L-glutamate = N-acetyl-L-glutamate + L-ornithine. It carries out the reaction L-glutamate + acetyl-CoA = N-acetyl-L-glutamate + CoA + H(+). The protein operates within amino-acid biosynthesis; L-arginine biosynthesis; L-ornithine and N-acetyl-L-glutamate from L-glutamate and N(2)-acetyl-L-ornithine (cyclic): step 1/1. Its pathway is amino-acid biosynthesis; L-arginine biosynthesis; N(2)-acetyl-L-ornithine from L-glutamate: step 1/4. Its function is as follows. Catalyzes two activities which are involved in the cyclic version of arginine biosynthesis: the synthesis of N-acetylglutamate from glutamate and acetyl-CoA as the acetyl donor, and of ornithine by transacetylation between N(2)-acetylornithine and glutamate. This is Arginine biosynthesis bifunctional protein ArgJ from Synechocystis sp. (strain ATCC 27184 / PCC 6803 / Kazusa).